The sequence spans 151 residues: Deoxyuridine 5'-triphosphate nucleotidohydrolase (151 aa).

Substrate is bound by residues 70-72 (RSG), Asn83, 87-89 (LID), and Met97.

This sequence belongs to the dUTPase family. Mg(2+) is required as a cofactor.

It catalyses the reaction dUTP + H2O = dUMP + diphosphate + H(+). The protein operates within pyrimidine metabolism; dUMP biosynthesis; dUMP from dCTP (dUTP route): step 2/2. In terms of biological role, this enzyme is involved in nucleotide metabolism: it produces dUMP, the immediate precursor of thymidine nucleotides and it decreases the intracellular concentration of dUTP so that uracil cannot be incorporated into DNA. This is Deoxyuridine 5'-triphosphate nucleotidohydrolase from Actinobacillus pleuropneumoniae serotype 5b (strain L20).